A 63-amino-acid polypeptide reads, in one-letter code: Translational regulator CsrA (63 aa).

This sequence belongs to the CsrA/RsmA family. In terms of assembly, homodimer; the beta-strands of each monomer intercalate to form a hydrophobic core, while the alpha-helices form wings that extend away from the core.

Its subcellular location is the cytoplasm. Its function is as follows. A key translational regulator that binds mRNA to regulate translation initiation and/or mRNA stability. Mediates global changes in gene expression, shifting from rapid growth to stress survival by linking envelope stress, the stringent response and the catabolite repression systems. Usually binds in the 5'-UTR; binding at or near the Shine-Dalgarno sequence prevents ribosome-binding, repressing translation, binding elsewhere in the 5'-UTR can activate translation and/or stabilize the mRNA. Its function is antagonized by small RNA(s). The sequence is that of Translational regulator CsrA from Alteromonas mediterranea (strain DSM 17117 / CIP 110805 / LMG 28347 / Deep ecotype).